The primary structure comprises 412 residues: Protein png-1 (412 aa).

Positions 150, 153, 182, and 185 each coordinate Zn(2+). A disordered region spans residues 363–412 (AAAARGGRSSPDNKSGANMMGSPATGDIKRPIPEDAPVPDVPSLWPTYGP).

It belongs to the transglutaminase-like superfamily. PNGase family.

This is Protein png-1 (un-7) from Neurospora crassa (strain ATCC 24698 / 74-OR23-1A / CBS 708.71 / DSM 1257 / FGSC 987).